The primary structure comprises 203 residues: LexA repressor (203 aa).

Residues 30-50 (VREICQAVSLKSTSTVHGHLK) constitute a DNA-binding region (H-T-H motif). Residues Ser127 and Lys164 each act as for autocatalytic cleavage activity in the active site.

Belongs to the peptidase S24 family. In terms of assembly, homodimer.

It carries out the reaction Hydrolysis of Ala-|-Gly bond in repressor LexA.. Represses a number of genes involved in the response to DNA damage (SOS response), including recA and lexA. In the presence of single-stranded DNA, RecA interacts with LexA causing an autocatalytic cleavage which disrupts the DNA-binding part of LexA, leading to derepression of the SOS regulon and eventually DNA repair. This is LexA repressor from Clostridium perfringens (strain ATCC 13124 / DSM 756 / JCM 1290 / NCIMB 6125 / NCTC 8237 / Type A).